The following is a 182-amino-acid chain: R-phycoerythrin subunit beta (182 aa).

A (2R,3E)-phycoerythrobilin-binding site is contributed by Cys-82.

Belongs to the phycobiliprotein family. In terms of assembly, homodimer. Contains one covalently linked phycoerythrobilin chromophore.

Green-light absorbing phycoerythrin of unknown function. The polypeptide is R-phycoerythrin subunit beta (cpeB) (Prochlorococcus marinus (strain SARG / CCMP1375 / SS120)).